The chain runs to 476 residues: Serine protease HTRA4 (476 aa).

An N-terminal signal peptide occupies residues 1–31; sequence MIRPQLRTAGLGRCLLPGLLLLLVPVLWAGA. The IGFBP N-terminal domain occupies 36 to 109; that stretch reads TQPSCPAVCQ…PGFPSTCGCP (74 aa). 8 disulfides stabilise this stretch: Cys40-Cys66, Cys44-Cys68, Cys49-Cys69, Cys55-Cys72, Cys80-Cys94, Cys88-Cys106, Cys108-Cys127, and Cys116-Cys152. The 67-residue stretch at 88–154 folds into the Kazal-like domain; that stretch reads CAPGLQCLQP…VPVQWGNCGD (67 aa). Positions 202-362 are serine protease; the sequence is GSGFIVSEDG…IPSDRVRQFL (161 aa). Residues His218, Asp248, and Ser326 each act as charge relay system in the active site. Positions 383–474 constitute a PDZ domain; it reads LQMLSLTVPL…NLLLTVIPET (92 aa).

It belongs to the peptidase S1C family.

It localises to the secreted. Its function is as follows. Serine protease. This is Serine protease HTRA4 (HTRA4) from Homo sapiens (Human).